The primary structure comprises 309 residues: MSIRIIPQDELGSSEKRTADMIPPLLFPRLKNLYNRRAERLRELAENNPLGDYLRFAALIAHAQEVVLYDHPLEMDLTTRIKEASAQGKPPLDIHVLPRDKHWQKLLMALIAELKPEMSGPALAVIENLEKASTQELEDMASALFASDFSSVSSDKAPFIWAALSLYWAQMANLIPGKARAEYGEQRQYCPVCGSMPVSSMVQIGTTQGLRYLHCNLCETEWHVVRVKCSNCEQSGKLHYWSLDDEQAAIKAESCDDCGTYLKILYQEKEPKVEAVADDLASLVLDARMEQEGYARSSINPFLFPGEGE.

The protein belongs to the FdhE family.

Its subcellular location is the cytoplasm. Functionally, necessary for formate dehydrogenase activity. This Escherichia coli O45:K1 (strain S88 / ExPEC) protein is Protein FdhE.